We begin with the raw amino-acid sequence, 580 residues long: Cyclin-K (580 aa).

Residues 262–580 form a disordered region; sequence KQQMPHHTPH…GGLGRAAWMR (319 aa). 2 stretches are compositionally biased toward low complexity: residues 263-277 and 285-321; these read QQMPHHTPHQLQQPP and VPQVQQSQPSQSSEPSQPQQKDPQQPAQQQQPAQQPK. Residues Ser324, Ser328, Ser329, and Ser340 each carry the phosphoserine modification. Residues 377-386 are compositionally biased toward low complexity; that stretch reads PLAAALGEAE. Residues 400 to 426 show a composition bias toward pro residues; that stretch reads QIPPPAHPAPVHQPPPLPHRPPPPPPS. The span at 427-444 shows a compositional bias: low complexity; that stretch reads SYMTGMSTTSSYMSGEGY. Positions 477–568 are enriched in pro residues; sequence VYPPNPPPPP…PPPIPPPGMP (92 aa).

This sequence belongs to the cyclin family. Cyclin C subfamily. Regulatory subunit of cyclin-dependent kinases. Identified in a complex with a kinase and the RNA polymerase II holoenzyme. Interacts with POLR2A. Interacts with CDK12 and CDK13. Interacts with CDK9 according to PubMed:10574912; does not interact with CDK9 according to PubMed:22012619. As to quaternary structure, (Microbial infection) Interacts with human herpes virus 1 (HHV-1) transcriptional regulator ICP22. In terms of tissue distribution, widely expressed. Highest levels in testis.

It localises to the nucleus. In terms of biological role, regulatory subunit of cyclin-dependent kinases that mediates activation of target kinases. Plays a role in transcriptional regulation via its role in regulating the phosphorylation of the C-terminal domain (CTD) of the large subunit of RNA polymerase II (POLR2A). This chain is Cyclin-K (CCNK), found in Homo sapiens (Human).